The chain runs to 162 residues: Disulfide bond formation protein B (162 aa).

Topologically, residues 1 to 8 are cytoplasmic; that stretch reads MTPLFRKA. Residues 9-25 form a helical membrane-spanning segment; that stretch reads VWLLFAVSVCAFAGSLA. The Periplasmic portion of the chain corresponds to 26–43; that stretch reads AQYVLGMEPCVLCISQRL. A disulfide bridge connects residues Cys35 and Cys38. The chain crosses the membrane as a helical span at residues 44-60; that stretch reads CVLATALCAAIVLMCRP. At 61–67 the chain is on the cytoplasmic side; the sequence is RRKAGGL. The chain crosses the membrane as a helical span at residues 68–85; the sequence is FGAVFISIPAVTGISVAA. The Periplasmic portion of the chain corresponds to 86 to 141; sequence YQLWLQSLPPGTAPSCGAPWTFRLKGWPLFDWFEPVVRGFGNCAEPDYLLGVALPV. Residues Cys101 and Cys128 are joined by a disulfide bond. A helical transmembrane segment spans residues 142–160; that stretch reads WSVAYFLAVALTVWWAWAR. At 161–162 the chain is on the cytoplasmic side; the sequence is AK.

This sequence belongs to the DsbB family.

The protein resides in the cell inner membrane. Its function is as follows. Required for disulfide bond formation in some periplasmic proteins. Acts by oxidizing the DsbA protein. The chain is Disulfide bond formation protein B from Neisseria meningitidis serogroup A / serotype 4A (strain DSM 15465 / Z2491).